A 756-amino-acid polypeptide reads, in one-letter code: Subtilisin-like protease SBT3.9 (756 aa).

Positions 1-25 are cleaved as a signal peptide; the sequence is MSKTILFLALFLSIVLNVQISFVVA. Residues 26–108 constitute a propeptide, activation peptide; that stretch reads ESKVYVVYLG…VIPNTLYEMT (83 aa). An Inhibitor I9 domain is found at 29–106; it reads VYVVYLGEKE…VQVIPNTLYE (78 aa). The 492-residue stretch at 112–603 folds into the Peptidase S8 domain; sequence TWDYLGVSPG…GGLINPEKAV (492 aa). Aspartate 142 functions as the Charge relay system in the catalytic mechanism. Residues asparagine 175 and asparagine 202 are each glycosylated (N-linked (GlcNAc...) asparagine). Catalysis depends on histidine 218, which acts as the Charge relay system. N-linked (GlcNAc...) asparagine glycans are attached at residues asparagine 233, asparagine 357, asparagine 395, and asparagine 519. A PA domain is found at 386–460; sequence DCEKLSANPN…ELGTDILFYI (75 aa). Serine 534 acts as the Charge relay system in catalysis.

It belongs to the peptidase S8 family.

The protein resides in the secreted. This chain is Subtilisin-like protease SBT3.9, found in Arabidopsis thaliana (Mouse-ear cress).